The sequence spans 40 residues: Photosystem II reaction center protein J (40 aa).

Residues 8-28 (IPLWLIGTVTGILVIGLLGIF) form a helical membrane-spanning segment.

Belongs to the PsbJ family. In terms of assembly, PSII is composed of 1 copy each of membrane proteins PsbA, PsbB, PsbC, PsbD, PsbE, PsbF, PsbH, PsbI, PsbJ, PsbK, PsbL, PsbM, PsbT, PsbX, PsbY, PsbZ, Psb30/Ycf12, at least 3 peripheral proteins of the oxygen-evolving complex and a large number of cofactors. It forms dimeric complexes.

It localises to the plastid. It is found in the chloroplast thylakoid membrane. Its function is as follows. One of the components of the core complex of photosystem II (PSII). PSII is a light-driven water:plastoquinone oxidoreductase that uses light energy to abstract electrons from H(2)O, generating O(2) and a proton gradient subsequently used for ATP formation. It consists of a core antenna complex that captures photons, and an electron transfer chain that converts photonic excitation into a charge separation. The protein is Photosystem II reaction center protein J of Angiopteris evecta (Mule's foot fern).